A 127-amino-acid chain; its full sequence is Putative membrane protein insertion efficiency factor (127 aa).

The disordered stretch occupies residues 71-106; sequence DPPPPPRLHRAAAARMPRQRDADPRDTTRCSSTGAE. Basic and acidic residues predominate over residues 88-98; that stretch reads RQRDADPRDTT.

Belongs to the UPF0161 family.

It is found in the cell inner membrane. In terms of biological role, could be involved in insertion of integral membrane proteins into the membrane. The chain is Putative membrane protein insertion efficiency factor from Sorangium cellulosum (strain So ce56) (Polyangium cellulosum (strain So ce56)).